A 238-amino-acid polypeptide reads, in one-letter code: 2,3-bisphosphoglycerate-dependent phosphoglycerate mutase (238 aa).

Residues 8 to 15 (RHGQSEWN), 21 to 22 (TG), Arg60, 86 to 89 (ERHY), Lys97, 113 to 114 (RR), and 182 to 183 (GN) contribute to the substrate site. Residue His9 is the Tele-phosphohistidine intermediate of the active site. The Proton donor/acceptor role is filled by Glu86.

Belongs to the phosphoglycerate mutase family. BPG-dependent PGAM subfamily. Homodimer.

The enzyme catalyses (2R)-2-phosphoglycerate = (2R)-3-phosphoglycerate. It functions in the pathway carbohydrate degradation; glycolysis; pyruvate from D-glyceraldehyde 3-phosphate: step 3/5. Its function is as follows. Catalyzes the interconversion of 2-phosphoglycerate and 3-phosphoglycerate. This is 2,3-bisphosphoglycerate-dependent phosphoglycerate mutase from Pelagibacter ubique (strain HTCC1062).